Reading from the N-terminus, the 250-residue chain is tRNA (guanine-N(1)-)-methyltransferase (250 aa).

S-adenosyl-L-methionine contacts are provided by residues Gly116 and 136-141; that span reads IGDYVL.

This sequence belongs to the RNA methyltransferase TrmD family. Homodimer.

The protein resides in the cytoplasm. The enzyme catalyses guanosine(37) in tRNA + S-adenosyl-L-methionine = N(1)-methylguanosine(37) in tRNA + S-adenosyl-L-homocysteine + H(+). Specifically methylates guanosine-37 in various tRNAs. This chain is tRNA (guanine-N(1)-)-methyltransferase, found in Pseudomonas putida (strain W619).